Reading from the N-terminus, the 150-residue chain is Large ribosomal subunit protein bL9 (150 aa).

Belongs to the bacterial ribosomal protein bL9 family.

Functionally, binds to the 23S rRNA. The protein is Large ribosomal subunit protein bL9 of Buchnera aphidicola subsp. Acyrthosiphon pisum (strain 5A).